A 236-amino-acid chain; its full sequence is MKMMDANEIISFIQNSKKSTPVKVYIKGDLEGIDFGSSAKTFITGNAGVVFGEWQDIQAAIEANQDKIEDYVVENDRRNSAIPLLDLKGVKARIEPGAIIRDHVEIGDNAVIMMGAVINIGAVIGEGTMIDMNAVLGGRATVGKNCHIGAGAVLAGVIEPPSAKPVVIEDDVLIGANAVILEGVTVGKGAVVAAGAIVVEDVPPYTVVAGVPARVIKQIDEQTRAKTEIKQELRQL.

The protein belongs to the transferase hexapeptide repeat family. DapH subfamily.

The catalysed reaction is (S)-2,3,4,5-tetrahydrodipicolinate + acetyl-CoA + H2O = L-2-acetamido-6-oxoheptanedioate + CoA. Its pathway is amino-acid biosynthesis; L-lysine biosynthesis via DAP pathway; LL-2,6-diaminopimelate from (S)-tetrahydrodipicolinate (acetylase route): step 1/3. Functionally, catalyzes the transfer of an acetyl group from acetyl-CoA to tetrahydrodipicolinate. The chain is 2,3,4,5-tetrahydropyridine-2,6-dicarboxylate N-acetyltransferase from Geobacillus thermodenitrificans (strain NG80-2).